Reading from the N-terminus, the 154-residue chain is 3-hydroxyacyl-[acyl-carrier-protein] dehydratase FabZ (154 aa).

Residue histidine 60 is part of the active site.

Belongs to the thioester dehydratase family. FabZ subfamily.

The protein resides in the cytoplasm. It carries out the reaction a (3R)-hydroxyacyl-[ACP] = a (2E)-enoyl-[ACP] + H2O. Its function is as follows. Involved in unsaturated fatty acids biosynthesis. Catalyzes the dehydration of short chain beta-hydroxyacyl-ACPs and long chain saturated and unsaturated beta-hydroxyacyl-ACPs. The protein is 3-hydroxyacyl-[acyl-carrier-protein] dehydratase FabZ of Actinobacillus pleuropneumoniae serotype 5b (strain L20).